The chain runs to 27 residues: Equinin A (27 aa).

Residues 1–13 show a composition bias toward basic and acidic residues; it reads AVDKGGGKAEKKD. The interval 1-27 is disordered; the sequence is AVDKGGGKAEKKDGNRKKKLAGGEGGG.

Its subcellular location is the secreted. Functionally, peptide with unknown function. Does not show antimicrobial and hemolytic activities. The protein is Equinin A of Actinia equina (Beadlet anemone).